Reading from the N-terminus, the 262-residue chain is Acyl-[acyl-carrier-protein]--UDP-N-acetylglucosamine O-acyltransferase (262 aa).

The protein belongs to the transferase hexapeptide repeat family. LpxA subfamily. Homotrimer.

It localises to the cytoplasm. It carries out the reaction a (3R)-hydroxyacyl-[ACP] + UDP-N-acetyl-alpha-D-glucosamine = a UDP-3-O-[(3R)-3-hydroxyacyl]-N-acetyl-alpha-D-glucosamine + holo-[ACP]. It participates in glycolipid biosynthesis; lipid IV(A) biosynthesis; lipid IV(A) from (3R)-3-hydroxytetradecanoyl-[acyl-carrier-protein] and UDP-N-acetyl-alpha-D-glucosamine: step 1/6. In terms of biological role, involved in the biosynthesis of lipid A, a phosphorylated glycolipid that anchors the lipopolysaccharide to the outer membrane of the cell. In Pasteurella multocida (strain Pm70), this protein is Acyl-[acyl-carrier-protein]--UDP-N-acetylglucosamine O-acyltransferase.